Reading from the N-terminus, the 310-residue chain is uncharacterized protein (310 aa).

Residues 1–70 (MAGNSQRRGA…ARGRTDETET (70 aa)) are disordered. A compositionally biased stretch (basic residues) spans 49-62 (AAKRAKAQQRRPAR). 3 residues coordinate S-adenosyl-L-methionine: G262, V282, and L291.

The protein belongs to the class IV-like SAM-binding methyltransferase superfamily. RNA methyltransferase TrmH family.

This is an uncharacterized protein from Mycobacterium ulcerans (strain Agy99).